The primary structure comprises 575 residues: Regulatory protein zeste (575 aa).

The span at 1–26 (MSAQGEGGGAGGSGGGGAGSDGGGNA) shows a compositional bias: gly residues. Disordered stretches follow at residues 1–53 (MSAQ…LPLT) and 151–174 (SVAS…VKVE). The interval 2–47 (SAQGEGGGAGGSGGGGAGSDGGGNAGQSSTGSGTVAVTNGGNSSAK) is hydrophobic. Over residues 31–51 (TGSGTVAVTNGGNSSAKNQLP) the composition is skewed to polar residues. Residues 48–128 (NQLPLTPRFT…WLNSRLRKQY (81 aa)) mediate DNA binding. Residues 151 to 164 (SVASAVPQQQQQQH) are compositionally biased toward low complexity.

In terms of assembly, self-associates forming complexes of several hundred monomers.

The protein localises to the nucleus. Involved in transvection phenomena (= synapsis-dependent gene expression), where the synaptic pairing of chromosomes carrying genes with which zeste interacts influences the expression of these genes. Zeste binds to DNA and stimulates transcription from a nearby promoter. The protein is Regulatory protein zeste (z) of Drosophila melanogaster (Fruit fly).